Consider the following 456-residue polypeptide: Equilibrative nucleoside transporter 1 (456 aa).

The Cytoplasmic segment spans residues T2 to K12. A helical membrane pass occupies residues A13 to W29. Residues N30 to N82 lie on the Extracellular side of the membrane. N-linked (GlcNAc...) asparagine glycosylation is present at N48. The chain crosses the membrane as a helical span at residues V83 to P107. The Cytoplasmic segment spans residues Q108–R111. A helical membrane pass occupies residues I112–V130. The Extracellular portion of the chain corresponds to K131 to P138. Residues F139–L157 traverse the membrane as a helical segment. Over Q158–A174 the chain is Cytoplasmic. Residues P175–S199 form a helical membrane-spanning segment. The Extracellular segment spans residues E200–F206. A helical membrane pass occupies residues G207–P227. Topologically, residues R228–V291 are cytoplasmic. 3 positions are modified to phosphoserine: S254, S269, and S273. Over residues S254–S266 the composition is skewed to basic and acidic residues. The tract at residues S254–T276 is disordered. The chain crosses the membrane as a helical span at residues L292 to T311. Over V312–T323 the chain is Extracellular. Residues W324 to W342 form a helical membrane-spanning segment. Residues L343–R359 lie on the Cytoplasmic side of the membrane. Residues W360 to C378 traverse the membrane as a helical segment. The Extracellular segment spans residues N379 to D393. The chain crosses the membrane as a helical span at residues A394–L413. Residues C414–G431 lie on the Cytoplasmic side of the membrane. Residues A432–F452 traverse the membrane as a helical segment. The Extracellular portion of the chain corresponds to R453 to V456.

It belongs to the SLC29A/ENT transporter (TC 2.A.57) family. Identified in a complex with STOM. Glycosylated. In terms of tissue distribution, expressed in testis at the blood-testis barrier (at protein level). Detected in erythrocytes (at protein level). Expressed at relatively high levels in cerebral cortex, particularly the frontal and parietal lobes, and the thalamus and basal ganglia (at protein level). In the midbrain expressed at moderate levels, whereas in the other areas of the brainstem, namely medulla and pons, cerebellum and the hippocampus expressed at lower amounts when compared to the other brain regions (at protein level). Expressed in Langerhans cells and lymphocytes in the pancreas (at protein level). Expressed in kidney, in polarized renal epithelial cells. Expressed in adipose tissues. Expressed in placenta. Expressed in small intestine.

The protein localises to the basolateral cell membrane. It is found in the apical cell membrane. Its subcellular location is the cell membrane. The enzyme catalyses adenosine(in) = adenosine(out). The catalysed reaction is guanosine(in) = guanosine(out). It carries out the reaction inosine(in) = inosine(out). It catalyses the reaction uridine(out) = uridine(in). The enzyme catalyses thymidine(in) = thymidine(out). The catalysed reaction is cytidine(in) = cytidine(out). It carries out the reaction adenine(out) = adenine(in). It catalyses the reaction guanine(out) = guanine(in). The enzyme catalyses thymine(out) = thymine(in). The catalysed reaction is uracil(in) = uracil(out). It carries out the reaction hypoxanthine(out) = hypoxanthine(in). Transporter activity is sensitive to low concentrations of the inhibitor nitrobenzylmercaptopurine riboside (NBMPR). Inhibited by dilazep. Inhibited by dipyridamole. Inhibited by hypoxanthine. Inhibited by azidothymidine (AZT). Inhibited by dideoxycytidine (ddC). Inhibited by dideoxyinosine (ddI). Inhibited by draflazine. Inhibited by soluflazine. Inhibited by cladribine. Inhibited by capecitabine. Inhibited by clofarabine. Inhibited by ribavirin. Modestly inhibited by acyclovir. Modestly inhibited by 5-fluorouracil. Its function is as follows. Uniporter involved in the facilitative transport of nucleosides and nucleobases, and contributes to maintaining their cellular homeostasis. Functions as a Na(+)-independent transporter. Involved in the transport of nucleosides such as adenosine, guanosine, inosine, uridine, thymidine and cytidine. Also transports purine nucleobases (hypoxanthine, adenine, guanine) and pyrimidine nucleobases (thymine, uracil). Mediates basolateral nucleoside uptake into Sertoli cells, thereby regulating the transport of nucleosides in testis across the blood-testis barrier. Regulates inosine levels in brown adipocytes tissues (BAT) and extracellular inosine levels, which controls BAT-dependent energy expenditure. The chain is Equilibrative nucleoside transporter 1 from Homo sapiens (Human).